The sequence spans 3132 residues: Toxin CdiA (3132 aa).

Residues 1–32 (MHQPPVRFTYRLLSYLVSAIIAGQPLLPAVGA) constitute a signal peptide (signal). The tract at residues 36-322 (PQNGAGMDKA…AGGNLSVTGT (287 aa)) is two-partner system transport domain (TPS). An FHA-1 region spans residues 351-1378 (GELTAGQNAM…ITMNTAHLLN (1028 aa)). The segment at 1379–1635 (SWDAISASHE…LSLSGASVSS (257 aa)) is receptor-binding domain (RBD). Residues 1636 to 1820 (YPLPSGNNGY…LSPEDITLHN (185 aa)) are YP domain. Positions 1821–1859 (GSVISGNNVQLAGGNITNSGSSINAQNDLLLDRTGSIDN) are periplasmic FHA-1 repeat (pFR). Positions 1930–2526 (RATDSLFMGA…QDSDRYDSRQ (597 aa)) are FHA-2. 2 disordered regions span residues 2195-2228 (TGTG…STIG) and 2456-2497 (AGIN…SGAQ). Polar residues-rich tracts occupy residues 2217–2228 (GTTQSQSASTIG) and 2483–2497 (VSLT…SGAQ). The tract at residues 2862-2904 (DNLSEQERQQISMLATIASGIAGGLVGNSTSAAGTGAQAGRNS) is pre-toxin (PT) domain. The VENN CT cleavage motif motif lies at 2905–2908 (VENN). The segment at 2909–3121 (AMSGLEGFGT…IGTVTDYQIE (213 aa)) is C-terminal effector domain (CT).

This sequence in the N-terminal section; belongs to the CdiA toxin family. As to quaternary structure, probably interacts with cognate immunity protein CdiI. Post-translationally, expressed as 303 kDa protein which can be processed to 284 kDa and 195 kDa forms.

It localises to the secreted. It is found in the target cell. The protein resides in the target cell cytoplasm. Its function is as follows. Toxic component of a toxin-immunity protein module, which functions as a cellular contact-dependent growth inhibition (CDI) system. CDI modules allow bacteria to communicate with and inhibit the growth of closely related neighboring bacteria (target cell counts decrease 1000- to 10(5)-fold) in a contact-dependent fashion. Inhibitory cells must be in logarithmic (not stationary) phase to inhibit growth of their targets, but protein synthesis is not necessary. The presence of P or S but not type 1 pili protects the target cells against growth inhibition for this CDI. BamA on the outer membrane of target cells acts as a receptor for CdiA, while target cell multidrug efflux pump AcrB facilitates its transport into the cytoplasm. Outer membrane receptor function is dependent on extracellular loops of BamA. Cells undergoing CDI show a 2- to 5-fold reversible decrease in aerobic respiration, proton motive force and steady-state ATP levels, suggesting this CT module is an ionophore that disrupts the target cell's inner cell membrane. Growth recovery requires an energy source. Cells expressing this protein in the absence of CdiI initially form filaments, some of which contain multiple nucleoids, while others are devoid of nucleoids. CDI cells induce the phage shock response, but pspA is not required for recovery from CDI. CDI is neutralized by its cognate immunity protein CdiI, but not by non-cognate CdiI from other bacteria with different CDI systems. Plays a role in biofilm formation, a region N-terminal to residue 644 is implicated in this receptor-independent cell adhesion. Functionally, the CdiA protein is thought to be exported from the cell through the central lumen of CdiB, the other half of its two-partner system (TPS). The TPS domain probably remains associated with CdiB while the FHA-1 domain forms an extended filament (33 nm long) with the receptor-binding domain (RBD) at its extremity; in the secretion arrested state the C-terminus of the RBD and YP domains form a hairpin-like structure as the FHA-2, PT and CT domains are periplasmic. The YP domain is probably responsible for this arrest at the point where it re-enters the host cell periplasm. Upon binding to a target cell outer membrane receptor (BamA for this CDI) a signal is transmitted to activate secretion. The filament becomes about 5 nm longer, the rest of CdiA is secreted and the FHA-2 domain becomes stably associated with the target cell's outer membrane where it facilitates entry of the toxic CT domain into the target cell periplasm. From there the toxic CT domain is cleaved and gains access to the target cell cytoplasm via an inner membrane protein (multidrug efflux pump AcrB for this CDI). This is Toxin CdiA from Escherichia coli.